The chain runs to 307 residues: Cyclin-dependent kinase 5 activator 1 (307 aa).

The N-myristoyl glycine moiety is linked to residue Gly-2. The residue at position 8 (Ser-8) is a Phosphoserine; by CDK5. The disordered stretch occupies residues 97-133 (TFAQPPPAQPPAPPASQLSGSQTGVSSSVKKAPHPAI). Positions 100–110 (QPPPAQPPAPP) are enriched in pro residues. Over residues 112-125 (SQLSGSQTGVSSSV) the composition is skewed to polar residues. Phosphothreonine; by CDK5 is present on Thr-138.

It belongs to the cyclin-dependent kinase 5 activator family. Heterodimer composed of a catalytic subunit CDK5 and a regulatory subunit CDK5R1 (p25) and macromolecular complex composed of at least CDK5, CDK5R1 (p35) and CDK5RAP1 or CDK5RAP2 or CDK5RAP3. Only the heterodimer shows kinase activity. Interacts with EPHA4 and NGEF; may mediate the activation of NGEF by EPHA4. Interacts with RASGRF2. The complex p35/CDK5 interacts with CLOCK. The p35 form is proteolytically cleaved by calpain, giving rise to the p25 form. P35 has a 5 to 10 fold shorter half-life compared to p25. The conversion results in deregulation of the CDK5 kinase: p25/CDK5 kinase displays an increased and altered tau phosphorylation in comparison to the p35/CDK5 kinase in vivo. In terms of processing, myristoylated. A proper myristoylation signal is essential for the proper distribution of p35. Post-translationally, phosphorylation at Ser-8 and Thr-138 by CDK5 prevents calpain-mediated proteolysis. Ubiquitinated, leading to its degradation: degradation of p35 by proteasome results in down-regulation of CDK5 activity. During this process, CDK5 phosphorylates p35 and induces its ubiquitination and subsequent degradation. Ubiquitinated by the CRL2(FEM1B) complex, which recognizes the -Gly-Leu-Asp-Arg C-degron at the C-terminus, leading to its degradation. As to expression, brain and neuron specific.

It is found in the cell membrane. The protein resides in the cell projection. It localises to the neuron projection. The protein localises to the nucleus. Its subcellular location is the cytoplasm. It is found in the perinuclear region. The protein resides in the perikaryon. In terms of biological role, p35 is a neuron specific activator of CDK5. The complex p35/CDK5 is required for neurite outgrowth and cortical lamination. Involved in dendritic spine morphogenesis by mediating the EFNA1-EPHA4 signaling. Activator of TPKII. The complex p35/CDK5 participates in the regulation of the circadian clock by modulating the function of CLOCK protein: phosphorylates CLOCK at 'Thr-451' and 'Thr-461' and regulates the transcriptional activity of the CLOCK-BMAL1 heterodimer in association with altered stability and subcellular distribution. This Rattus norvegicus (Rat) protein is Cyclin-dependent kinase 5 activator 1 (Cdk5r1).